The primary structure comprises 179 residues: Peroxiredoxin (179 aa).

The 151-residue stretch at 2 to 152 folds into the Thioredoxin domain; the sequence is TMEKQVPIVT…VEGWFEEEGF (151 aa). The Cysteine sulfenic acid (-SOH) intermediate (for peroxiredoxin activity) role is filled by C56.

This sequence belongs to the peroxiredoxin family. Prx5 subfamily. In terms of assembly, monomer.

It catalyses the reaction a hydroperoxide + 2 glutathione = an alcohol + glutathione disulfide + H2O. Functionally, thiol-specific peroxidase that catalyzes the reduction of hydrogen peroxide and organic hydroperoxides to water and alcohols, respectively. Plays a role in cell protection against oxidative stress by detoxifying peroxides. In Rhizobium etli, this protein is Peroxiredoxin.